The following is a 507-amino-acid chain: ATP synthase subunit alpha, chloroplastic (507 aa).

170 to 177 (GDRQTGKT) lines the ATP pocket.

Belongs to the ATPase alpha/beta chains family. As to quaternary structure, F-type ATPases have 2 components, CF(1) - the catalytic core - and CF(0) - the membrane proton channel. CF(1) has five subunits: alpha(3), beta(3), gamma(1), delta(1), epsilon(1). CF(0) has four main subunits: a, b, b' and c.

Its subcellular location is the plastid. The protein localises to the chloroplast thylakoid membrane. The catalysed reaction is ATP + H2O + 4 H(+)(in) = ADP + phosphate + 5 H(+)(out). Its function is as follows. Produces ATP from ADP in the presence of a proton gradient across the membrane. The alpha chain is a regulatory subunit. This is ATP synthase subunit alpha, chloroplastic from Eucalyptus globulus subsp. globulus (Tasmanian blue gum).